The following is a 456-amino-acid chain: Acetylcholine receptor subunit alpha (456 aa).

An N-terminal signal peptide occupies residues 1–20 (MNYFILILPILPYLYGPAVC). The Extracellular segment spans residues 21-230 (SEDETRLVKT…ITYHFLLLRL (210 aa)). 2 cysteine pairs are disulfide-bonded: Cys-148/Cys-162 and Cys-212/Cys-213. Asn-161 is a glycosylation site (N-linked (GlcNAc...) asparagine). A run of 3 helical transmembrane segments spans residues 231-255 (PLYF…VFYL), 263-281 (MTLS…LVIV), and 297-316 (YMLF…VIVI). At 317-428 (NTHHRSPSTH…WKFVAMVLDH (112 aa)) the chain is on the cytoplasmic side. The chain crosses the membrane as a helical span at residues 429–447 (ILLCVFMAVCIIGTLGVFA).

This sequence belongs to the ligand-gated ion channel (TC 1.A.9) family. Acetylcholine receptor (TC 1.A.9.1) subfamily. Alpha-1/CHRNA1 sub-subfamily. As to quaternary structure, one of the alpha chains that assemble within the acetylcholine receptor, a pentamer of two alpha chains, a beta, a delta, and a gamma or epsilon chains.

It localises to the postsynaptic cell membrane. The protein resides in the cell membrane. It carries out the reaction K(+)(in) = K(+)(out). The catalysed reaction is Na(+)(in) = Na(+)(out). Upon acetylcholine binding, the AChR responds by an extensive change in conformation that affects all subunits and leads to opening of an ion-conducting channel across the plasma membrane. This is Acetylcholine receptor subunit alpha (chrna1) from Danio rerio (Zebrafish).